The chain runs to 846 residues: Arsenate respiratory reductase molybdopterin-containing subunit ArrA (846 aa).

Residues 1 to 29 constitute a signal peptide (tat-type signal); sequence MRIKRREFLKASAAVGAVAVASPTLNAFA. The 4Fe-4S Mo/W bis-MGD-type domain maps to 43-99; sequence GKWIPSTCQGCTTWCPVEFLFRMAVRSKYAATQLSKANNGYCCVRGHLMLQQLYDPD. Cys50, Cys53, Cys57, and Cys85 together coordinate [4Fe-4S] cluster. Residue Arg155 coordinates arsenite. Residue Tyr156 coordinates arsenate. His179 lines the arsenite pocket. Ser180 lines the arsenate pocket. Position 183 (Cys183) interacts with Mo-bis(molybdopterin guanine dinucleotide). Lys188 is a binding site for arsenate. Residue Tyr200 coordinates arsenite.

Belongs to the prokaryotic molybdopterin-containing oxidoreductase family. Heterodimer composed of one large subunit (ArrA) and one small subunit (ArrB). [4Fe-4S] cluster serves as cofactor. Mo-bis(molybdopterin guanine dinucleotide) is required as a cofactor. Predicted to be exported by the Tat system. The position of the signal peptide cleavage has been experimentally proven.

It localises to the periplasm. It catalyses the reaction arsenite + A + H2O = arsenate + AH2 + H(+). Functionally, component of the arsenate respiratory reductase (Arr) complex, which catalyzes the reduction of arsenate (As(V)) to arsenite (As(III)). Can use acetate as the electron donor. ArrA is the arsenate-binding subunit. The chain is Arsenate respiratory reductase molybdopterin-containing subunit ArrA from Chrysiogenes arsenatis.